A 221-amino-acid polypeptide reads, in one-letter code: ATP-dependent Clp protease proteolytic subunit 1, mitochondrial (221 aa).

The N-terminal 25 residues, 1–25, are a transit peptide targeting the mitochondrion; it reads MLRRLVTSSLSASRSMSASVQSRVG. Residue serine 120 is the Nucleophile of the active site. Histidine 145 is a catalytic residue.

Belongs to the peptidase S14 family. In terms of assembly, tetradecamer that assembles into a two heptameric rings with a central cavity. As to expression, expressed in the intestine.

Its subcellular location is the mitochondrion matrix. It carries out the reaction Hydrolysis of proteins to small peptides in the presence of ATP and magnesium. alpha-casein is the usual test substrate. In the absence of ATP, only oligopeptides shorter than five residues are hydrolyzed (such as succinyl-Leu-Tyr-|-NHMec, and Leu-Tyr-Leu-|-Tyr-Trp, in which cleavage of the -Tyr-|-Leu- and -Tyr-|-Trp bonds also occurs).. Clp cleaves peptides in various proteins in a process that requires ATP hydrolysis. Clp may be responsible for a fairly general and central housekeeping function rather than for the degradation of specific substrates. The polypeptide is ATP-dependent Clp protease proteolytic subunit 1, mitochondrial (clpp-1) (Caenorhabditis elegans).